The primary structure comprises 524 residues: Vang-like protein 1 (524 aa).

Residues 1-15 (MDTESTYSGYSYYSS) are compositionally biased toward low complexity. A disordered region spans residues 1 to 85 (MDTESTYSGY…TTAITGTSEH (85 aa)). The Cytoplasmic segment spans residues 1-117 (MDTESTYSGY…KRYLGLTVAS (117 aa)). Over residues 73 to 85 (GETTTAITGTSEH) the composition is skewed to polar residues. Phosphoserine occurs at positions 86 and 88. The chain crosses the membrane as a helical span at residues 118–138 (FLGLLVFLTPIAFILLPPILW). Over 139-151 (RDELEPCGTICEG) the chain is Extracellular. Residues 152-172 (LFISMAFKLLILLIGTWALFF) traverse the membrane as a helical segment. The Cytoplasmic portion of the chain corresponds to 173–182 (RKRRADMPRV). Residues 183 to 203 (FVFRALLLVLIFLFVVSYWLF) form a helical membrane-spanning segment. Topologically, residues 204-222 (YGVRILDSRDRNYQGIVQY) are extracellular. Residues 223–243 (AVSLVDALLFIHYLAIVLLEL) form a helical membrane-spanning segment. Topologically, residues 244–524 (RQLQPMFTLQ…VLRLQSETSV (281 aa)) are cytoplasmic.

Belongs to the Vang family. Heterodimer with VANGL2. Interacts through its C-terminal region with the N-terminal half of DVL1, DVL2 and DVL3. The PDZ domain of DVL1, DVL2 and DVL3 is required for the interaction. According to PubMed:11956595, ubiquitously expressed. According to PubMed:12011995, expressed specifically in testis and ovary.

It is found in the cell membrane. The polypeptide is Vang-like protein 1 (VANGL1) (Homo sapiens (Human)).